We begin with the raw amino-acid sequence, 290 residues long: GTPase Era (290 aa).

The region spanning 2-169 (KSGFVSIIGR…KDKIYENLNE (168 aa)) is the Era-type G domain. The G1 stretch occupies residues 10–17 (GRPSTGKS). 10–17 (GRPSTGKS) is a GTP binding site. The segment at 36–40 (QTTRN) is G2. The tract at residues 57–60 (DTPG) is G3. Residues 57-61 (DTPGF) and 119-122 (NKID) each bind GTP. The G4 stretch occupies residues 119–122 (NKID). The interval 148 to 150 (ISA) is G5. Positions 200–276 (LKEELPYSIY…NLFLQVKLRK (77 aa)) constitute a KH type-2 domain.

It belongs to the TRAFAC class TrmE-Era-EngA-EngB-Septin-like GTPase superfamily. Era GTPase family. In terms of assembly, monomer.

Its subcellular location is the cytoplasm. It is found in the cell inner membrane. Functionally, an essential GTPase that binds both GDP and GTP, with rapid nucleotide exchange. Plays a role in 16S rRNA processing and 30S ribosomal subunit biogenesis and possibly also in cell cycle regulation and energy metabolism. The sequence is that of GTPase Era from Borrelia duttonii (strain Ly).